Consider the following 342-residue polypeptide: Isopentenyl-diphosphate delta-isomerase (342 aa).

11–12 (RK) lines the substrate pocket. FMN contacts are provided by residues Ser68, 69-71 (SMT), Ser99, and Asn128. 99–101 (SQR) serves as a coordination point for substrate. Position 162 (Gln162) interacts with substrate. A Mg(2+)-binding site is contributed by Glu163. FMN contacts are provided by residues Lys194, Ser219, Thr224, 275–277 (GVR), and 296–297 (AK).

This sequence belongs to the IPP isomerase type 2 family. In terms of assembly, homooctamer. Dimer of tetramers. It depends on FMN as a cofactor. NADPH serves as cofactor. Requires Mg(2+) as cofactor.

The protein resides in the cytoplasm. It catalyses the reaction isopentenyl diphosphate = dimethylallyl diphosphate. Its function is as follows. Involved in the biosynthesis of isoprenoids. Catalyzes the 1,3-allylic rearrangement of the homoallylic substrate isopentenyl (IPP) to its allylic isomer, dimethylallyl diphosphate (DMAPP). The polypeptide is Isopentenyl-diphosphate delta-isomerase (Legionella pneumophila (strain Paris)).